The following is a 123-amino-acid chain: Putative oocyte-secreted protein 1 homolog (123 aa).

An N-terminal signal peptide occupies residues 1 to 26; the sequence is MKTILGFKGLFYLHSLIWTCAGDWSA.

The protein belongs to the PLAC1 family.

The protein localises to the secreted. May be involved in cell differentiation. The chain is Putative oocyte-secreted protein 1 homolog (OOSP1) from Homo sapiens (Human).